Reading from the N-terminus, the 179-residue chain is Translation initiation factor IF-3 (179 aa).

This sequence belongs to the IF-3 family. Monomer.

Its subcellular location is the cytoplasm. In terms of biological role, IF-3 binds to the 30S ribosomal subunit and shifts the equilibrium between 70S ribosomes and their 50S and 30S subunits in favor of the free subunits, thus enhancing the availability of 30S subunits on which protein synthesis initiation begins. This chain is Translation initiation factor IF-3, found in Bradyrhizobium diazoefficiens (strain JCM 10833 / BCRC 13528 / IAM 13628 / NBRC 14792 / USDA 110).